The sequence spans 38 residues: MKVRTSVRKLCRNCKIVKRNRVIRVLCSVDAKHKQRQG.

Belongs to the bacterial ribosomal protein bL36 family.

This is Large ribosomal subunit protein bL36 from Wigglesworthia glossinidia brevipalpis.